The primary structure comprises 284 residues: Diaminopimelate epimerase (284 aa).

Residues asparagine 13 and asparagine 70 each coordinate substrate. The active-site Proton donor is the cysteine 79. Substrate contacts are provided by residues 80–81, asparagine 167, asparagine 200, and 218–219; these read GN and ER. Residue cysteine 227 is the Proton acceptor of the active site. 228–229 contributes to the substrate binding site; it reads GT.

This sequence belongs to the diaminopimelate epimerase family. In terms of assembly, homodimer.

It is found in the cytoplasm. It carries out the reaction (2S,6S)-2,6-diaminopimelate = meso-2,6-diaminopimelate. It functions in the pathway amino-acid biosynthesis; L-lysine biosynthesis via DAP pathway; DL-2,6-diaminopimelate from LL-2,6-diaminopimelate: step 1/1. Its function is as follows. Catalyzes the stereoinversion of LL-2,6-diaminopimelate (L,L-DAP) to meso-diaminopimelate (meso-DAP), a precursor of L-lysine and an essential component of the bacterial peptidoglycan. This is Diaminopimelate epimerase from Prochlorococcus marinus (strain NATL2A).